The chain runs to 113 residues: Transmembrane protein 256 (113 aa).

Positions 1 to 29 (MAGPAAAFRRLGALSGAAALGFASYGAHG) are cleaved as a signal peptide. Over 30 to 63 (AQFPDAYGKELFDKANKHHFLHSLALLGVPHCRK) the chain is Extracellular. Lys-43 is subject to N6-acetyllysine. The chain crosses the membrane as a helical span at residues 64–84 (PLWAGLLLASGTTLFCTSFYY). Residues 85-92 (QALSGDPS) lie on the Cytoplasmic side of the membrane. The helical transmembrane segment at 93–113 (IQTLAPAGGTLLLLGWLALAL) threads the bilayer.

Belongs to the TMEM256 family.

It is found in the membrane. This is Transmembrane protein 256 (TMEM256) from Homo sapiens (Human).